A 428-amino-acid polypeptide reads, in one-letter code: Nocturnin (428 aa).

The N-terminal 72 residues, 1 to 72, are a transit peptide targeting the mitochondrion; sequence MYQSPRRLCS…PMGNGTSRLY (72 aa). The interval 21-66 is disordered; the sequence is RRTLVPGPRRTLAPPVLGSRPASPQLQAAASGAARSRPRTVSPMGN. Low complexity predominate over residues 39–55; that stretch reads SRPASPQLQAAASGAAR. Glu-192 lines the Mg(2+) pocket. Substrate contacts are provided by residues Glu-192, 216–218, Asn-260, 283–286, and 321–323; these read KPW, HLKA, and DFN. An interaction with PPARG region spans residues 340–350; the sequence is NLNSAYKLLSP. Residue His-411 coordinates substrate.

This sequence belongs to the CCR4/nocturin family. Interacts with PPARG. Mg(2+) serves as cofactor.

Its subcellular location is the cytoplasm. The protein resides in the nucleus. The protein localises to the perinuclear region. It localises to the mitochondrion. It catalyses the reaction NADP(+) + H2O = phosphate + NAD(+). It carries out the reaction NADPH + H2O = phosphate + NADH. Phosphatase which catalyzes the conversion of NADP(+) to NAD(+) and of NADPH to NADH. Shows a small preference for NADPH over NADP(+). Represses translation and promotes degradation of target mRNA molecules. Plays an important role in post-transcriptional regulation of metabolic genes under circadian control. Exerts a rhythmic post-transcriptional control of genes necessary for metabolic functions including nutrient absorption, glucose/insulin sensitivity, lipid metabolism, adipogenesis, inflammation and osteogenesis. Plays an important role in favoring adipogenesis over osteoblastogenesis and acts as a key regulator of the adipogenesis/osteogenesis balance. Promotes adipogenesis by facilitating PPARG nuclear translocation which activates its transcriptional activity. Regulates circadian expression of NOS2 in the liver and negatively regulates the circadian expression of IGF1 in the bone. Critical for proper development of early embryos. The protein is Nocturnin of Rattus norvegicus (Rat).